The primary structure comprises 733 residues: Zinc finger transcription factor ace1 (733 aa).

Over residues 1–11 the composition is skewed to basic residues; it reads MSFSNPRRRTP. Disordered stretches follow at residues 1-22, 34-63, and 89-183; these read MSFS…CEHG, GATF…SQSA, and ASLS…SSTT. A compositionally biased stretch (low complexity) spans 39 to 49; that stretch reads SPTSPSASSAA. The segment covering 132 to 142 has biased composition (basic residues); that stretch reads LRPRSVRRTRN. The segment covering 148–158 has biased composition (polar residues); the sequence is GIGSSVVSTND. Over residues 171–183 the composition is skewed to low complexity; the sequence is ASALTRSAASSTT. C2H2-type zinc fingers lie at residues 400–424, 428–456, and 463–488; these read KKCR…EKTH, WKCP…NDKH, and YECL…EKAH. Positions 497–533 are disordered; sequence TNGKKAPSQNGSTAQQTPPLANVSTPSSTPSYSVPTP. Polar residues predominate over residues 503-515; the sequence is PSQNGSTAQQTPP. Residues 519 to 530 are compositionally biased toward low complexity; the sequence is VSTPSSTPSYSV.

It is found in the nucleus. In terms of biological role, binds to the promoter of the cbh1 gene and activates transcription. The chain is Zinc finger transcription factor ace1 (ace1) from Hypocrea jecorina (Trichoderma reesei).